Consider the following 170-residue polypeptide: Acireductone dioxygenase (170 aa).

The Fe(2+) site is built by H99, H101, E105, and H144. Positions 99, 101, 105, and 144 each coordinate Ni(2+).

It belongs to the acireductone dioxygenase (ARD) family. As to quaternary structure, monomer. The cofactor is Fe(2+). Requires Ni(2+) as cofactor.

It carries out the reaction 1,2-dihydroxy-5-(methylsulfanyl)pent-1-en-3-one + O2 = 3-(methylsulfanyl)propanoate + CO + formate + 2 H(+). It catalyses the reaction 1,2-dihydroxy-5-(methylsulfanyl)pent-1-en-3-one + O2 = 4-methylsulfanyl-2-oxobutanoate + formate + 2 H(+). It participates in amino-acid biosynthesis; L-methionine biosynthesis via salvage pathway; L-methionine from S-methyl-5-thio-alpha-D-ribose 1-phosphate: step 5/6. In terms of biological role, catalyzes 2 different reactions between oxygen and the acireductone 1,2-dihydroxy-3-keto-5-methylthiopentene (DHK-MTPene) depending upon the metal bound in the active site. Fe-containing acireductone dioxygenase (Fe-ARD) produces formate and 2-keto-4-methylthiobutyrate (KMTB), the alpha-ketoacid precursor of methionine in the methionine recycle pathway. Ni-containing acireductone dioxygenase (Ni-ARD) produces methylthiopropionate, carbon monoxide and formate, and does not lie on the methionine recycle pathway. This chain is Acireductone dioxygenase, found in Bacillus mycoides (strain KBAB4) (Bacillus weihenstephanensis).